Here is a 364-residue protein sequence, read N- to C-terminus: Caffeic acid 3-O-methyltransferase 3 (364 aa).

Position 129-135 (129-135 (MNQDKVL)) interacts with substrate. A substrate binding region spans residues 161 to 179 (AFEYHGTDPRFNKVFNKGM). S-adenosyl-L-methionine contacts are provided by Gly207, Asp230, Asp250, Met251, and Lys264. Residue His268 is the Proton acceptor of the active site.

Belongs to the class I-like SAM-binding methyltransferase superfamily. Cation-independent O-methyltransferase family. COMT subfamily. As to quaternary structure, homodimer.

It catalyses the reaction (E)-caffeate + S-adenosyl-L-methionine = (E)-ferulate + S-adenosyl-L-homocysteine + H(+). It functions in the pathway aromatic compound metabolism; phenylpropanoid biosynthesis. Functionally, catalyzes the conversion of caffeic acid to ferulic acid and of 5-hydroxyferulic acid to sinapic acid. The resulting products may subsequently be converted to the corresponding alcohols that are incorporated into lignins. The polypeptide is Caffeic acid 3-O-methyltransferase 3 (HOMT3) (Populus kitakamiensis (Aspen)).